A 238-amino-acid chain; its full sequence is Probable transcriptional regulatory protein SUB0364 (238 aa).

It belongs to the TACO1 family. YeeN subfamily.

Its subcellular location is the cytoplasm. In Streptococcus uberis (strain ATCC BAA-854 / 0140J), this protein is Probable transcriptional regulatory protein SUB0364.